A 449-amino-acid polypeptide reads, in one-letter code: Cysteine--tRNA ligase (449 aa).

Cysteine 30 is a Zn(2+) binding site. A 'HIGH' region motif is present at residues 32–42; the sequence is PTVYDRAHLGN. Zn(2+) is bound by residues cysteine 210, histidine 235, and glutamate 239. Positions 268–272 match the 'KMSKS' region motif; sequence KMSKS. Residue lysine 271 participates in ATP binding.

The protein belongs to the class-I aminoacyl-tRNA synthetase family. As to quaternary structure, monomer. The cofactor is Zn(2+).

The protein resides in the cytoplasm. The enzyme catalyses tRNA(Cys) + L-cysteine + ATP = L-cysteinyl-tRNA(Cys) + AMP + diphosphate. In Acidiphilium cryptum (strain JF-5), this protein is Cysteine--tRNA ligase.